A 94-amino-acid polypeptide reads, in one-letter code: uncharacterized protein (94 aa).

A disordered region spans residues 1-22 (MATLQQAQQQNNQLTQQNNQLT). The stretch at 1-77 (MATLQQAQQQ…NRLHSENHRL (77 aa)) forms a coiled coil.

This is an uncharacterized protein from Acheta domesticus (House cricket).